Consider the following 284-residue polypeptide: Isopentenyl-diphosphate delta-isomerase (284 aa).

Lys77 lines the substrate pocket. Positions 81 and 92 each coordinate Mg(2+). The region spanning Leu90–Leu256 is the Nudix hydrolase domain. Arg111 and Lys115 together coordinate substrate. Residue Cys127 is part of the active site. Substrate is bound at residue Ser128. Positions Ser128 to Gly172 match the Nudix box motif. Mg(2+)-binding residues include Glu204 and Glu206. The active site involves Glu206.

It belongs to the IPP isomerase type 1 family. Requires Mg(2+) as cofactor.

It is found in the cytoplasm. It carries out the reaction isopentenyl diphosphate = dimethylallyl diphosphate. It participates in isoprenoid biosynthesis; dimethylallyl diphosphate biosynthesis; dimethylallyl diphosphate from isopentenyl diphosphate: step 1/1. Its function is as follows. Isopentenyl-diphosphate delta-isomerase; part of the second module of ergosterol biosynthesis pathway that includes the middle steps of the pathway. IDI1 catalyzes the 1,3-allylic rearrangement of isopentenyl (IPP) to its highly electrophilic allylic isomer, dimethylallyl diphosphate (DMAPP). The second module is carried out in the vacuole and involves the formation of farnesyl diphosphate, which is also an important intermediate in the biosynthesis of ubiquinone, dolichol, heme and prenylated proteins. Activity by the mevalonate kinase ERG12 first converts mevalonate into 5-phosphomevalonate. 5-phosphomevalonate is then further converted to 5-diphosphomevalonate by the phosphomevalonate kinase ERG8. The diphosphomevalonate decarboxylase MVD then produces isopentenyl diphosphate. The isopentenyl-diphosphate delta-isomerase IDI1 then catalyzes the 1,3-allylic rearrangement of the homoallylic substrate isopentenyl (IPP) to its highly electrophilic allylic isomer, dimethylallyl diphosphate (DMAPP). Finally the farnesyl diphosphate synthase ERG20 catalyzes the sequential condensation of isopentenyl pyrophosphate with dimethylallyl pyrophosphate, and then with the resultant geranylpyrophosphate to the ultimate product farnesyl pyrophosphate. The sequence is that of Isopentenyl-diphosphate delta-isomerase from Candida albicans (strain SC5314 / ATCC MYA-2876) (Yeast).